The following is an 854-amino-acid chain: Nucleolar MIF4G domain-containing protein 1 homolog (854 aa).

Disordered regions lie at residues 1-38 (MAKI…FAGK), 55-105 (QSQL…DAEV), 120-161 (PLGK…KQRI), and 217-306 (RKWE…RDAE). A compositionally biased stretch (basic and acidic residues) spans 15–28 (TRKEQRKQKSEFKK). Positions 60-71 (KNKKKKRSKKPK) are enriched in basic residues. The segment covering 88-105 (IDSDDDESIDSDFSDAEV) has biased composition (acidic residues). Basic and acidic residues-rich tracts occupy residues 135 to 156 (RQDE…ESKS) and 217 to 238 (RKWE…KEEA). A compositionally biased stretch (acidic residues) spans 242 to 289 (SDEEEDKEDRDEPMDNFSEDDSGSEGEDDDEDLTGEEEQSEEDSEQEE). The segment covering 290 to 306 (NAPKIKEDIYGRKRDAE) has biased composition (basic and acidic residues). In terms of domain architecture, MIF4G spans 352 to 553 (LKQCKGLLNR…DILNAVKNNN (202 aa)). Residues 650-764 (AERRNIFCII…QLSVLKVVDF (115 aa)) form the MI domain.

It belongs to the CWC22 family.

It is found in the nucleus. Its subcellular location is the nucleolus. In Drosophila melanogaster (Fruit fly), this protein is Nucleolar MIF4G domain-containing protein 1 homolog.